Reading from the N-terminus, the 282-residue chain is Large ribosomal subunit protein uL2 (282 aa).

2 disordered regions span residues 26–55 and 218–266; these read KKSPEKSLLESQSHTAGRNNYGRMTVRHRG and PHVR…HNKS. A compositionally biased stretch (polar residues) spans 34–43; that stretch reads LESQSHTAGR. A compositionally biased stretch (basic residues) spans 254 to 266; it reads TIGKKTRNKHNKS.

Belongs to the universal ribosomal protein uL2 family. As to quaternary structure, part of the 50S ribosomal subunit. Forms a bridge to the 30S subunit in the 70S ribosome.

In terms of biological role, one of the primary rRNA binding proteins. Required for association of the 30S and 50S subunits to form the 70S ribosome, for tRNA binding and peptide bond formation. It has been suggested to have peptidyltransferase activity; this is somewhat controversial. Makes several contacts with the 16S rRNA in the 70S ribosome. This chain is Large ribosomal subunit protein uL2, found in Pediococcus pentosaceus (strain ATCC 25745 / CCUG 21536 / LMG 10740 / 183-1w).